Here is a 247-residue protein sequence, read N- to C-terminus: Adenosylcobinamide-GDP ribazoletransferase (247 aa).

The next 5 helical transmembrane spans lie at 34 to 54, 59 to 79, 113 to 133, 138 to 158, and 194 to 214; these read IITFPLIGLLLGAISGLVFMV, CGVPLAALFSVLVLALMTGGF, GGLALIFVVLAKILVLSELTL, ILASLAAACAVSRGTAALLMY, and VLLPGMHGVAAMVVTMVAIFI.

Belongs to the CobS family. It depends on Mg(2+) as a cofactor.

It is found in the cell inner membrane. It catalyses the reaction alpha-ribazole + adenosylcob(III)inamide-GDP = adenosylcob(III)alamin + GMP + H(+). The enzyme catalyses alpha-ribazole 5'-phosphate + adenosylcob(III)inamide-GDP = adenosylcob(III)alamin 5'-phosphate + GMP + H(+). It participates in cofactor biosynthesis; adenosylcobalamin biosynthesis; adenosylcobalamin from cob(II)yrinate a,c-diamide: step 7/7. Joins adenosylcobinamide-GDP and alpha-ribazole to generate adenosylcobalamin (Ado-cobalamin). Also synthesizes adenosylcobalamin 5'-phosphate from adenosylcobinamide-GDP and alpha-ribazole 5'-phosphate. This Escherichia coli O127:H6 (strain E2348/69 / EPEC) protein is Adenosylcobinamide-GDP ribazoletransferase.